Here is a 1252-residue protein sequence, read N- to C-terminus: DNA-directed RNA polymerase subunit beta (1252 aa).

It belongs to the RNA polymerase beta chain family. In terms of assembly, the RNAP catalytic core consists of 2 alpha, 1 beta, 1 beta' and 1 omega subunit. When a sigma factor is associated with the core the holoenzyme is formed, which can initiate transcription.

The enzyme catalyses RNA(n) + a ribonucleoside 5'-triphosphate = RNA(n+1) + diphosphate. DNA-dependent RNA polymerase catalyzes the transcription of DNA into RNA using the four ribonucleoside triphosphates as substrates. In Chlamydia abortus (strain DSM 27085 / S26/3) (Chlamydophila abortus), this protein is DNA-directed RNA polymerase subunit beta.